The sequence spans 247 residues: tRNA (guanine-N(7)-)-methyltransferase (247 aa).

S-adenosyl-L-methionine-binding positions include G70, 93-94 (EI), 128-129 (NA), and L148. D151 is a catalytic residue. 226 to 228 (SEE) provides a ligand contact to S-adenosyl-L-methionine.

This sequence belongs to the class I-like SAM-binding methyltransferase superfamily. TrmB family.

Its subcellular location is the nucleus. It catalyses the reaction guanosine(46) in tRNA + S-adenosyl-L-methionine = N(7)-methylguanosine(46) in tRNA + S-adenosyl-L-homocysteine. The protein operates within tRNA modification; N(7)-methylguanine-tRNA biosynthesis. In terms of biological role, catalyzes the formation of N(7)-methylguanine at position 46 (m7G46) in tRNA. This is tRNA (guanine-N(7)-)-methyltransferase from Drosophila pseudoobscura pseudoobscura (Fruit fly).